Here is an 847-residue protein sequence, read N- to C-terminus: MAAAAPAAAALTEAPAVPGTAEPETGDEDSREVRVLQSLRGRIYEAKNLLPYLGPNKMRDCFCTINLDQEEVYRTQVVEKSLSPYFSEEFYFEIPRTFQYLSFYVYDKNVLQRDLRIGKVAIKKEDLCSHSGKETWFSLQPIDSNSEVQGKVHLELKLNELITENGTVCQQLVVHIKACHGLPLINGQSCDPYATVSLVGPSRNDQKKTKVKKKTSNPQFNEVFYFEVTRSSSYTRKSQFQVEEEDIEKLEIRIDLWNNENLVQDVFLGEIKVPVNVLRNDSSHQAWYLLQPRDNGNKSSKPDDLGSLLLTLCYTEDYVLPSEYYGPLKALLLKSPDVQPVSASAAYILGEICRDQKDAVLPLVRLLLHHNKLVPFITAVADLDLKDTQDANAIFRGNSLATQCLTEMMKIVGGHYLKVTLKPVLDEICESSKSCEIDPVKLKEGDNVESNKENLYYYVDKVFSAIVGSSVSCPTVMCDIFYSLRQMAAKRFPNNPHVQYSAVSSFVFLRFFAVAILSPHAFHLRPHYPDTQTVRTLTLISKTIQIIGNWGCQSRRKSRFKKSVMCEFLKMFQEERYFTDVKKFLDEISSTETKESSGTSEPVHLKEGEMYKRAQGRTRIGKKNFKKRWFCLTSKELTYHKQQGKDAIYTIPVKNILAVEKLEESSFNKKNMFQVIHTEKTLYIQANNCVEANEWIDMLCRVSRCNHNRLSSFHPSAYLNGNWLCCQETSEGTPGCKPCTAGIPADIQIDIDEDRETERIYSVFTLSLLKLQKMEEACGSIAVYQGPQKEPGYSKFTIEDSVATFKTIQQIKSTIEKLDEPHEKYRKKRSSSAKYGSKENPIVGKIS.

A compositionally biased stretch (low complexity) spans 1–18 (MAAAAPAAAALTEAPAVP). A disordered region spans residues 1–31 (MAAAAPAAAALTEAPAVPGTAEPETGDEDSR). At A2 the chain carries N-acetylalanine. C2 domains lie at 19 to 137 (GTAE…ETWF) and 148 to 288 (VQGK…QAWY). One can recognise a Ras-GAP domain in the interval 371-588 (NKLVPFITAV…TDVKKFLDEI (218 aa)). S554 is modified (phosphoserine). Residues 603–704 (VHLKEGEMYK…WIDMLCRVSR (102 aa)) form the PH domain. Residues 706-742 (NHNRLSSFHPSAYLNGNWLCCQETSEGTPGCKPCTAG) form a Btk-type zinc finger. 4 residues coordinate Zn(2+): H714, C725, C726, and C736. The tract at residues 819 to 847 (DEPHEKYRKKRSSSAKYGSKENPIVGKIS) is disordered.

Widely expressed. Higher expression in brain, placenta, and kidney.

The protein localises to the cell membrane. In terms of biological role, inhibitory regulator of the Ras-cyclic AMP pathway. May bind inositol tetrakisphosphate (IP4) and phospholipids. This chain is Ras GTPase-activating protein 2 (Rasa2), found in Rattus norvegicus (Rat).